The sequence spans 243 residues: Protein Thf1 (243 aa).

Positions 180-224 (SKARVEKDLNLYKSNLEKMAQAVELTEQILESERRKREQNESAKL) form a coiled coil. Over residues 210–220 (ESERRKREQNE) the composition is skewed to basic and acidic residues. The disordered stretch occupies residues 210 to 243 (ESERRKREQNESAKLNTGSSEQMSQGVEACSNIS). The segment covering 221–243 (SAKLNTGSSEQMSQGVEACSNIS) has biased composition (polar residues).

This sequence belongs to the THF1 family.

In terms of biological role, may be involved in photosynthetic membrane biogenesis. This is Protein Thf1 from Prochlorococcus marinus (strain MIT 9313).